The following is a 2380-amino-acid chain: Probable polyketide synthase 25 (2380 aa).

Positions 1 to 18 are enriched in polar residues; sequence MDNSYLNNPQFDINNGNK. The tract at residues 1–29 is disordered; sequence MDNSYLNNPQFDINNGNKEVTDDDNNKNN. The region spanning 31 to 457 is the Ketosynthase family 3 (KS3) domain; the sequence is DNLVAIVGVG…GSNCCLVLSQ (427 aa). Active-site for beta-ketoacyl synthase activity residues include cysteine 198, histidine 340, and histidine 380. Positions 649–682 are acyl/malonyl transferase; the sequence is GIKASFMLGHSLGEVTTAYCSGMIDIDQLCYLIY. Serine 659 functions as the For acyl/malonyl transferase activity in the catalytic mechanism. The interval 948–1070 is N-terminal hotdog fold; that stretch reads ISILGNSMQD…ANFQLYNNGK (123 aa). A PKS/mFAS DH domain is found at 948–1234; sequence ISILGNSMQD…CTSLTPVKDP (287 aa). The Proton acceptor; for dehydratase activity role is filled by histidine 982. A C-terminal hotdog fold region spans residues 1085–1234; it reads NLSSIPWDKF…CTSLTPVKDP (150 aa). Aspartate 1148 serves as the catalytic Proton donor; for dehydratase activity. The region spanning 2299–2376 is the Carrier domain; that stretch reads KNSTNIKDKF…MVCQIINDNF (78 aa). O-(pantetheine 4'-phosphoryl)serine is present on serine 2336.

It depends on pantetheine 4'-phosphate as a cofactor.

Probable polyketide synthase. The polypeptide is Probable polyketide synthase 25 (pks25) (Dictyostelium discoideum (Social amoeba)).